Reading from the N-terminus, the 131-residue chain is Lymphocyte antigen 6C2 (131 aa).

Positions 1 to 26 (MDSTHATKSCLLILLVALLCAGRAQG) are cleaved as a signal peptide. A UPAR/Ly6 domain is found at 27 to 116 (LQCYECYGVP…TAGSTWTMAG (90 aa)). 5 disulfide bridges follow: Cys29-Cys53, Cys32-Cys41, Cys46-Cys74, Cys78-Cys95, and Cys96-Cys101. Residue Gly109 is the site of GPI-anchor amidated glycine attachment. A propeptide spans 110 to 131 (STWTMAGVLLFSLSSVILQTLL) (removed in mature form).

Its subcellular location is the cell membrane. This Mus musculus (Mouse) protein is Lymphocyte antigen 6C2 (Ly6c2).